The primary structure comprises 233 residues: Glycolipid transfer protein 3 (233 aa).

The a ganglioside GM3 (d18:1(4E)) site is built by Asp-79, Asn-83, Trp-126, and His-165.

This sequence belongs to the GLTP family.

May be involved in glycolipids transfer. The polypeptide is Glycolipid transfer protein 3 (Arabidopsis thaliana (Mouse-ear cress)).